The chain runs to 543 residues: Telomerase Cajal body protein 1 homolog (543 aa).

Residues 95 to 128 (GRPKNAVESPHAGVPMETSLAAEEEANGDEEEES) are disordered. Over residues 116-127 (AEEEANGDEEEE) the composition is skewed to acidic residues. WD repeat units lie at residues 237-283 (PEGG…LRCS), 291-329 (DEVM…RFCD), and 378-421 (GHKG…QPLV).

The protein belongs to the TCAB1 family.

The protein resides in the nucleus. The protein localises to the cajal body. RNA chaperone that plays a key role in Cajal body formation. Specifically recognizes and binds the Cajal body box (CAB box) present in both small Cajal body RNAs (scaRNAs). Probably acts by mediating localization of scaRNAs to Cajal bodies. The protein is Telomerase Cajal body protein 1 homolog of Drosophila melanogaster (Fruit fly).